The following is an 83-amino-acid chain: Cytochrome c oxidase subunit 7A2, mitochondrial (83 aa).

The transit peptide at 1-23 directs the protein to the mitochondrion; that stretch reads MLRNLLALRQIAQRTISTTSRRH. Residues 24–48 are Mitochondrial matrix-facing; that stretch reads FENKVPEKQKLFQEDNGMPVHLKGG. Lys33 carries the post-translational modification N6-acetyllysine. A helical transmembrane segment spans residues 49-77; it reads ASDALLYRATMALTLGGTAYAIYLLAMAA. The Mitochondrial intermembrane portion of the chain corresponds to 78–83; that stretch reads FPKKQN.

The protein belongs to the cytochrome c oxidase VIIa family. Component of the cytochrome c oxidase (complex IV, CIV), a multisubunit enzyme composed of 14 subunits. The complex is composed of a catalytic core of 3 subunits MT-CO1, MT-CO2 and MT-CO3, encoded in the mitochondrial DNA, and 11 supernumerary subunits COX4I, COX5A, COX5B, COX6A, COX6B, COX6C, COX7A, COX7B, COX7C, COX8 and NDUFA4, which are encoded in the nuclear genome. The complex exists as a monomer or a dimer and forms supercomplexes (SCs) in the inner mitochondrial membrane with NADH-ubiquinone oxidoreductase (complex I, CI) and ubiquinol-cytochrome c oxidoreductase (cytochrome b-c1 complex, complex III, CIII), resulting in different assemblies (supercomplex SCI(1)III(2)IV(1) and megacomplex MCI(2)III(2)IV(2)). Interacts with PET100.

The protein resides in the mitochondrion inner membrane. It participates in energy metabolism; oxidative phosphorylation. In terms of biological role, component of the cytochrome c oxidase, the last enzyme in the mitochondrial electron transport chain which drives oxidative phosphorylation. The respiratory chain contains 3 multisubunit complexes succinate dehydrogenase (complex II, CII), ubiquinol-cytochrome c oxidoreductase (cytochrome b-c1 complex, complex III, CIII) and cytochrome c oxidase (complex IV, CIV), that cooperate to transfer electrons derived from NADH and succinate to molecular oxygen, creating an electrochemical gradient over the inner membrane that drives transmembrane transport and the ATP synthase. Cytochrome c oxidase is the component of the respiratory chain that catalyzes the reduction of oxygen to water. Electrons originating from reduced cytochrome c in the intermembrane space (IMS) are transferred via the dinuclear copper A center (CU(A)) of subunit 2 and heme A of subunit 1 to the active site in subunit 1, a binuclear center (BNC) formed by heme A3 and copper B (CU(B)). The BNC reduces molecular oxygen to 2 water molecules using 4 electrons from cytochrome c in the IMS and 4 protons from the mitochondrial matrix. This is Cytochrome c oxidase subunit 7A2, mitochondrial (Cox7a2) from Mus musculus (Mouse).